The following is a 572-amino-acid chain: Cytosolic Fe-S cluster assembly factor NAR1 (572 aa).

Residues Cys20, Cys62, Cys65, Cys68, Cys205, and Cys260 each coordinate [4Fe-4S] cluster. A disordered region spans residues 416 to 436 (ARPSRMPGGKPIGSARRPNGK). Residues Cys450 and Cys454 each contribute to the [4Fe-4S] cluster site.

The protein belongs to the NARF family.

Functionally, component of the cytosolic Fe/S protein assembly machinery. Required for maturation of extramitochondrial Fe/S proteins. May play a role in the transfer of pre-assembled Fe/S clusters to target apoproteins. The chain is Cytosolic Fe-S cluster assembly factor NAR1 (NAR1) from Botryotinia fuckeliana (strain B05.10) (Noble rot fungus).